The primary structure comprises 288 residues: ATP synthase gamma chain (288 aa).

The protein belongs to the ATPase gamma chain family. In terms of assembly, F-type ATPases have 2 components, CF(1) - the catalytic core - and CF(0) - the membrane proton channel. CF(1) has five subunits: alpha(3), beta(3), gamma(1), delta(1), epsilon(1). CF(0) has three main subunits: a, b and c.

It is found in the cell inner membrane. Produces ATP from ADP in the presence of a proton gradient across the membrane. The gamma chain is believed to be important in regulating ATPase activity and the flow of protons through the CF(0) complex. This Glaesserella parasuis serovar 5 (strain SH0165) (Haemophilus parasuis) protein is ATP synthase gamma chain.